The following is a 308-amino-acid chain: 15-cis-phytoene synthase (308 aa).

It belongs to the phytoene/squalene synthase family. The cofactor is ATP. Requires Mn(2+) as cofactor. Mg(2+) is required as a cofactor.

The enzyme catalyses 2 (2E,6E,10E)-geranylgeranyl diphosphate = 15-cis-phytoene + 2 diphosphate. Its pathway is carotenoid biosynthesis; phytoene biosynthesis. Functionally, involved in the biosynthesis of carotenoids. Catalyzes the condensation of two molecules of geranylgeranyl diphosphate (GGPP) to give prephytoene diphosphate (PPPP) and the subsequent rearrangement of the cyclopropylcarbinyl intermediate to yield 15-cis-phytoene. The protein is 15-cis-phytoene synthase (crtB) of Synechococcus elongatus (strain ATCC 33912 / PCC 7942 / FACHB-805) (Anacystis nidulans R2).